A 292-amino-acid chain; its full sequence is 4-hydroxy-tetrahydrodipicolinate synthase (292 aa).

Threonine 45 is a pyruvate binding site. The active-site Proton donor/acceptor is the tyrosine 133. The active-site Schiff-base intermediate with substrate is the lysine 161. Residue isoleucine 203 coordinates pyruvate.

This sequence belongs to the DapA family. In terms of assembly, homotetramer; dimer of dimers.

Its subcellular location is the cytoplasm. It carries out the reaction L-aspartate 4-semialdehyde + pyruvate = (2S,4S)-4-hydroxy-2,3,4,5-tetrahydrodipicolinate + H2O + H(+). It functions in the pathway amino-acid biosynthesis; L-lysine biosynthesis via DAP pathway; (S)-tetrahydrodipicolinate from L-aspartate: step 3/4. Functionally, catalyzes the condensation of (S)-aspartate-beta-semialdehyde [(S)-ASA] and pyruvate to 4-hydroxy-tetrahydrodipicolinate (HTPA). In Salmonella arizonae (strain ATCC BAA-731 / CDC346-86 / RSK2980), this protein is 4-hydroxy-tetrahydrodipicolinate synthase.